Here is a 552-residue protein sequence, read N- to C-terminus: MGNKCCSKRQDQELALAYPTGGYKKSDYTFGQTHINSSGGGNMGGVLGQKHNNGGSLDSRYTPDPNHRGPLKIGGKGGVDIIRPRTTPTGVPGVVLKRVVVALYDYKSRDESDLSFMKGDRMEVIDDTESDWWRVVNLTTRQEGLIPLNFVAEERSVNSEDWFFENVLRKEADKLLLAEENPRGTFLVRPSEHNPNGYSLSVKDWEDGRGYHVKHYRIKPLDNGGYYIATNQTFPSLQALVMAYSKNALGLCHILSRPCPKPQPQMWDLGPELRDKYEIPRSEIQLLRKLGRGNFGEVFYGKWRNSIDVAVKTLREGTMSTAAFLQEAAIMKKFRHNRLVALYAVCSQEEPIYIVQEYMSKGSLLDFLREGDGRYLHFEDLIYIATQVASGMEYLESKQLIHRDLAARNVLIGENNVAKICDFGLARVIADDEYCPKQGSRFPVKWTAPEAIIYGKFSIKSDVWSYGILLMELFTYGQVPYPGMHSREVIENIERGFRMPKPTNHYFPDNIYQLLLQCWDAVPEKRPTFEFLNHYFESFSVTSEVPYREVQD.

An SH3 domain is found at 95–156 (VLKRVVVALY…PLNFVAEERS (62 aa)). One can recognise an SH2 domain in the interval 162–259 (WFFENVLRKE…GLCHILSRPC (98 aa)). A Protein kinase domain is found at 284–537 (IQLLRKLGRG…TFEFLNHYFE (254 aa)). ATP is bound by residues 290–298 (LGRGNFGEV) and Lys312. The active-site Proton acceptor is the Asp404. At Tyr434 the chain carries Phosphotyrosine; by autocatalysis.

It belongs to the protein kinase superfamily. Tyr protein kinase family. SRC subfamily. As to quaternary structure, interacts with hzg. Phosphorylated. In terms of tissue distribution, after the first 8 hours of development, accumulates almost exclusively in neural tissues such as the brain, ventral nerve chord, and eye-antennal disks, and in differentiating smooth muscle.

It carries out the reaction L-tyrosyl-[protein] + ATP = O-phospho-L-tyrosyl-[protein] + ADP + H(+). Its function is as follows. Tyrosine-protein kinase that may play a role in the development of neural tissue and smooth muscle. May contribute to tyrosine phosphorylation of Dscam1, a cell surface receptor involved in targeting of growing axons during eye morphogenesis. The protein is Tyrosine-protein kinase Src64B (Src64B) of Drosophila melanogaster (Fruit fly).